We begin with the raw amino-acid sequence, 194 residues long: FMN-dependent NADH:quinone oxidoreductase (194 aa).

Residues serine 9, 15–17 (SIS), and 85–88 (MYNF) contribute to the FMN site.

This sequence belongs to the azoreductase type 1 family. As to quaternary structure, homodimer. It depends on FMN as a cofactor.

The catalysed reaction is 2 a quinone + NADH + H(+) = 2 a 1,4-benzosemiquinone + NAD(+). It catalyses the reaction N,N-dimethyl-1,4-phenylenediamine + anthranilate + 2 NAD(+) = 2-(4-dimethylaminophenyl)diazenylbenzoate + 2 NADH + 2 H(+). In terms of biological role, quinone reductase that provides resistance to thiol-specific stress caused by electrophilic quinones. Its function is as follows. Also exhibits azoreductase activity. Catalyzes the reductive cleavage of the azo bond in aromatic azo compounds to the corresponding amines. This chain is FMN-dependent NADH:quinone oxidoreductase, found in Xanthomonas oryzae pv. oryzae (strain KACC10331 / KXO85).